The primary structure comprises 250 residues: NADH-quinone oxidoreductase subunit C (250 aa).

Belongs to the complex I 30 kDa subunit family. NDH-1 is composed of 14 different subunits. Subunits NuoB, C, D, E, F, and G constitute the peripheral sector of the complex.

The protein localises to the cell inner membrane. It catalyses the reaction a quinone + NADH + 5 H(+)(in) = a quinol + NAD(+) + 4 H(+)(out). Its function is as follows. NDH-1 shuttles electrons from NADH, via FMN and iron-sulfur (Fe-S) centers, to quinones in the respiratory chain. The immediate electron acceptor for the enzyme in this species is believed to be ubiquinone. Couples the redox reaction to proton translocation (for every two electrons transferred, four hydrogen ions are translocated across the cytoplasmic membrane), and thus conserves the redox energy in a proton gradient. The sequence is that of NADH-quinone oxidoreductase subunit C from Xylella fastidiosa (strain 9a5c).